Reading from the N-terminus, the 263-residue chain is Receptor-transporting protein 1 (263 aa).

Over 1–238 (MRIFRPWRLR…QTGSGWNFCS (238 aa)) the chain is Cytoplasmic. A 3CxxC-type zinc finger spans residues 88 to 197 (ASGRFHCSWC…GEFCEACQEG (110 aa)). The chain crosses the membrane as a helical span at residues 239-259 (IPWCLFWATVLLLIIYLQFSF). Residues 260–263 (RSSV) lie on the Extracellular side of the membrane.

It belongs to the TMEM7 family. Interacts with olfactory receptors. In terms of tissue distribution, expressed in testis.

It is found in the cell membrane. In terms of biological role, specifically promotes functional cell surface expression of olfactory receptors, but not of other GPCRs. This is Receptor-transporting protein 1 (RTP1) from Homo sapiens (Human).